The chain runs to 152 residues: ADP-ribose glycohydrolase OARD1 (152 aa).

A2 bears the N-acetylalanine mark. A Macro domain is found at 2-152 (ASSLNEDPEG…TDIKITVYTL (151 aa)). Position 4 is a phosphoserine (S4). L21 lines the substrate pocket. The active-site Nucleophile is the K84. Residues 119-125 (RIGCGLD) and L152 contribute to the substrate site. Residue D125 is the Proton acceptor of the active site.

As to expression, ubiquitous.

The protein localises to the nucleus. It is found in the nucleoplasm. Its subcellular location is the nucleolus. It localises to the chromosome. The catalysed reaction is 2''-O-acetyl-ADP-D-ribose + H2O = ADP-D-ribose + acetate + H(+). The enzyme catalyses 5-O-(ADP-D-ribosyl)-L-glutamyl-[protein] + H2O = L-glutamyl-[protein] + ADP-D-ribose + H(+). It catalyses the reaction alpha-NAD(+) + H2O = ADP-D-ribose + nicotinamide + H(+). Subject to competitive inhibition by the product ADP-ribose. Functionally, ADP-ribose glycohydrolase that hydrolyzes ADP-ribose and acts on different substrates, such as proteins ADP-ribosylated on glutamate and O-acetyl-ADP-D-ribose. Specifically acts as a glutamate mono-ADP-ribosylhydrolase by mediating the removal of mono-ADP-ribose attached to glutamate residues on proteins. Does not act on poly-ADP-ribosylated proteins: the poly-ADP-ribose chain of poly-ADP-ribosylated glutamate residues must by hydrolyzed into mono-ADP-ribosylated glutamate by PARG to become a substrate for OARD1. Deacetylates O-acetyl-ADP ribose, a signaling molecule generated by the deacetylation of acetylated lysine residues in histones and other proteins. Catalyzes the deacylation of O-acetyl-ADP-ribose, O-propionyl-ADP-ribose and O-butyryl-ADP-ribose, yielding ADP-ribose plus acetate, propionate and butyrate, respectively. In Homo sapiens (Human), this protein is ADP-ribose glycohydrolase OARD1.